Here is a 377-residue protein sequence, read N- to C-terminus: uncharacterized protein (377 aa).

32-39 (GPINSGKT) contacts ATP.

It belongs to the archaeal ATPase family.

This is an uncharacterized protein from Methanocaldococcus jannaschii (strain ATCC 43067 / DSM 2661 / JAL-1 / JCM 10045 / NBRC 100440) (Methanococcus jannaschii).